Reading from the N-terminus, the 466-residue chain is Zinc metalloproteinase/disintegrin (466 aa).

Positions 1-6 (FPYQGS) are cleaved as a signal peptide. Positions 7 to 174 (SIILESGNVN…PIKKASQLIV (168 aa)) are excised as a propeptide. Residues 180–377 (RYMEIVIVVD…ENPPCILNKP (198 aa)) form the Peptidase M12B domain. Positions 183 and 267 each coordinate Ca(2+). 3 disulfide bridges follow: Cys-291–Cys-372, Cys-331–Cys-356, and Cys-333–Cys-339. His-316 provides a ligand contact to Zn(2+). Glu-317 is a catalytic residue. Zn(2+) is bound by residues His-320 and His-326. Positions 372 and 375 each coordinate Ca(2+). A propeptide spanning residues 377-401 (PLRTDTVSTPVSGNELLEAGKDYDR) is cleaved from the precursor. Residues 385-466 (TPVSGNELLE…GDCPRNPYHA (82 aa)) enclose the Disintegrin domain. 3 disulfide bridges follow: Cys-422–Cys-428, Cys-427–Cys-452, and Cys-440–Cys-459. The short motif at 444 to 446 (RGD) is the Cell attachment site element.

The protein belongs to the venom metalloproteinase (M12B) family. P-II subfamily. P-IIa sub-subfamily. Monomer. Zn(2+) serves as cofactor. As to expression, expressed by the venom gland.

Its subcellular location is the secreted. Its function is as follows. Impairs hemostasis in the envenomed animal. Functionally, inhibits platelet aggregation induced by ADP, thrombin, platelet-activating factor and collagen. Acts by inhibiting fibrinogen interaction with platelet receptors GPIIb/GPIIIa (ITGA2B/ITGB3). This chain is Zinc metalloproteinase/disintegrin, found in Deinagkistrodon acutus (Hundred-pace snake).